The sequence spans 428 residues: CinA-like protein (428 aa).

The protein belongs to the CinA family.

This Gemmatimonas aurantiaca (strain DSM 14586 / JCM 11422 / NBRC 100505 / T-27) protein is CinA-like protein.